Consider the following 146-residue polypeptide: Hemoglobin subunit beta-1 (146 aa).

One can recognise a Globin domain in the interval 2–146 (HWTAEEKQLI…VSHSLARRYH (145 aa)). Heme b-binding residues include His-63 and His-92.

This sequence belongs to the globin family. The major hemoglobin component (HbIII) is a tetramer of two alpha-2 chains and two beta-1 chains. In terms of tissue distribution, red blood cells.

Involved in oxygen transport from the lung to the various peripheral tissues. The sequence is that of Hemoglobin subunit beta-1 (HBB1) from Varanus albigularis (White-throated monitor).